Here is a 189-residue protein sequence, read N- to C-terminus: ATP-dependent protease subunit HslV (189 aa).

T12 is an active-site residue. Residues A172, C175, and T178 each coordinate Na(+).

It belongs to the peptidase T1B family. HslV subfamily. As to quaternary structure, a double ring-shaped homohexamer of HslV is capped on each side by a ring-shaped HslU homohexamer. The assembly of the HslU/HslV complex is dependent on binding of ATP.

It is found in the cytoplasm. The enzyme catalyses ATP-dependent cleavage of peptide bonds with broad specificity.. With respect to regulation, allosterically activated by HslU binding. Its function is as follows. Protease subunit of a proteasome-like degradation complex believed to be a general protein degrading machinery. In Ehrlichia ruminantium (strain Welgevonden), this protein is ATP-dependent protease subunit HslV.